The sequence spans 284 residues: Diaminopimelate epimerase (284 aa).

Residues Asn20, Gln53, and Asn73 each contribute to the substrate site. Catalysis depends on Cys82, which acts as the Proton donor. Substrate-binding positions include 83 to 84 (GN), Asn167, Asn200, and 218 to 219 (ER). The active-site Proton acceptor is the Cys227. 228–229 (GS) contributes to the substrate binding site.

It belongs to the diaminopimelate epimerase family. In terms of assembly, homodimer.

Its subcellular location is the cytoplasm. It catalyses the reaction (2S,6S)-2,6-diaminopimelate = meso-2,6-diaminopimelate. Its pathway is amino-acid biosynthesis; L-lysine biosynthesis via DAP pathway; DL-2,6-diaminopimelate from LL-2,6-diaminopimelate: step 1/1. In terms of biological role, catalyzes the stereoinversion of LL-2,6-diaminopimelate (L,L-DAP) to meso-diaminopimelate (meso-DAP), a precursor of L-lysine and an essential component of the bacterial peptidoglycan. This Xylella fastidiosa (strain M12) protein is Diaminopimelate epimerase.